A 422-amino-acid polypeptide reads, in one-letter code: Cystine lyase CORI3 (422 aa).

Belongs to the class-I pyridoxal-phosphate-dependent aminotransferase family. In terms of assembly, homodimer. The cofactor is pyridoxal 5'-phosphate. Expressed in cotyledons, sepals, pistils, flower buds, phloem companion cells and vascular tissues of petiole, leaf, filament and fruit.

The enzyme catalyses L-cystine + H2O = S-sulfanyl-L-cysteine + pyruvate + NH4(+). Functionally, possesses cystine lyase activity in vitro. Does not possess tyrosine aminotransferase, alanine aminotransferase, aspartate aminotransferase and tryptophan aminotransferase activities. The sequence is that of Cystine lyase CORI3 from Arabidopsis thaliana (Mouse-ear cress).